The chain runs to 267 residues: Movement protein (267 aa).

This sequence belongs to the tobamovirus movement protein family.

The protein localises to the host cytoplasm. It is found in the host cytoskeleton. The protein resides in the host cell junction. It localises to the host plasmodesma. Functionally, transports viral genome to neighboring plant cells directly through plasmosdesmata, without any budding. The movement protein allows efficient cell to cell propagation, by bypassing the host cell wall barrier. Forms a ribonucleoprotein complex with viral RNA. Binds microtubules and modulates microtubule stability. Can bind double-stranded DNA. In Brassicaceae (TVCV), this protein is Movement protein (MP).